The primary structure comprises 311 residues: Energy-coupling factor transporter ATP-binding protein EcfA (311 aa).

Positions 2-237 constitute an ABC transporter domain; sequence IELRDLSYSY…AELIRRASLR (236 aa). 35-42 contacts ATP; it reads GPNGAGKS.

It belongs to the ABC transporter superfamily. Energy-coupling factor EcfA family. In terms of assembly, forms a stable energy-coupling factor (ECF) transporter complex composed of 2 membrane-embedded substrate-binding proteins (S component), 2 ATP-binding proteins (A component) and 2 transmembrane proteins (T component).

The protein resides in the cell membrane. ATP-binding (A) component of a common energy-coupling factor (ECF) ABC-transporter complex. Unlike classic ABC transporters this ECF transporter provides the energy necessary to transport a number of different substrates. This is Energy-coupling factor transporter ATP-binding protein EcfA from Methanothermobacter thermautotrophicus (strain ATCC 29096 / DSM 1053 / JCM 10044 / NBRC 100330 / Delta H) (Methanobacterium thermoautotrophicum).